The sequence spans 198 residues: Type 1 fimbriae regulatory protein FimE (198 aa).

In terms of domain architecture, Tyr recombinase spans 2 to 184; sequence SKRRYLTGKE…NAARFAGLWE (183 aa). Active-site residues include Arg-41, Lys-66, His-136, Arg-139, and His-162. Tyr-171 serves as the catalytic O-(3'-phospho-DNA)-tyrosine intermediate.

This sequence belongs to the 'phage' integrase family.

In terms of biological role, fimE is one of the 2 regulatory proteins which control the phase variation of type 1 fimbriae in E.coli. These proteins mediate the periodic inversion of a 300bp DNA segment that harbors the promoter for the fimbrial structural gene, fimA. FimE switches fimA off. The polypeptide is Type 1 fimbriae regulatory protein FimE (fimE) (Escherichia coli O6:H1 (strain CFT073 / ATCC 700928 / UPEC)).